Consider the following 449-residue polypeptide: Ribulose bisphosphate carboxylase large chain (449 aa).

Residues 1–2 constitute a propeptide that is removed on maturation; it reads MS. Pro3 bears the N-acetylproline mark. Lys14 carries the N6,N6,N6-trimethyllysine modification. Positions 123 and 173 each coordinate substrate. Lys175 (proton acceptor) is an active-site residue. Residue Lys177 coordinates substrate. Residues Lys201, Asp203, and Glu204 each contribute to the Mg(2+) site. N6-carboxylysine is present on Lys201. His294 acts as the Proton acceptor in catalysis. Substrate contacts are provided by Arg295, His327, and Ser379.

This sequence belongs to the RuBisCO large chain family. Type I subfamily. In terms of assembly, heterohexadecamer of 8 large chains and 8 small chains; disulfide-linked. The disulfide link is formed within the large subunit homodimers. Mg(2+) is required as a cofactor. Post-translationally, the disulfide bond which can form in the large chain dimeric partners within the hexadecamer appears to be associated with oxidative stress and protein turnover.

The protein resides in the plastid. It localises to the chloroplast. The enzyme catalyses 2 (2R)-3-phosphoglycerate + 2 H(+) = D-ribulose 1,5-bisphosphate + CO2 + H2O. It carries out the reaction D-ribulose 1,5-bisphosphate + O2 = 2-phosphoglycolate + (2R)-3-phosphoglycerate + 2 H(+). Its function is as follows. RuBisCO catalyzes two reactions: the carboxylation of D-ribulose 1,5-bisphosphate, the primary event in carbon dioxide fixation, as well as the oxidative fragmentation of the pentose substrate in the photorespiration process. Both reactions occur simultaneously and in competition at the same active site. The polypeptide is Ribulose bisphosphate carboxylase large chain (Hippocratea richardiana).